The sequence spans 461 residues: ERBB receptor feedback inhibitor 1 (461 aa).

Serine 2 bears the N-acetylserine mark. Phosphothreonine is present on residues threonine 126 and threonine 130. Residues 228 to 353 form a disordered region; it reads QNRVVPDPNP…VMPPTQSFAP (126 aa). A phosphoserine mark is found at serine 251 and serine 272. Over residues 265–274 the composition is skewed to polar residues; that stretch reads SSCTHRASPS. The span at 283 to 292 shows a compositional bias: pro residues; sequence PPRVPIPPRP. Residue serine 301 is modified to Phosphoserine. A compositionally biased stretch (basic and acidic residues) spans 311 to 324; it reads DEDRPPKVPPREPL. A compositionally biased stretch (polar residues) spans 325 to 336; the sequence is SRSNSRTPSPKS. The tract at residues 333–362 is interaction with EGFR and ERBB2 and regulation of EGFR activation; sequence SPKSLPSYLNGVMPPTQSFAPDPKYVSSKA. Serine 460 carries the post-translational modification Phosphoserine.

It belongs to the MIG6 family. In terms of assembly, interacts with EGFR. Interacts with ERBB2. As to expression, detected in lung, in airway epithelial cells and alveolar type 2 cells (at protein level). Detected in uterus stroma, luminal epithelium and glandular epithelium.

It is found in the cytoplasm. The protein localises to the cell membrane. It localises to the nucleus. In terms of biological role, negative regulator of EGFR signaling in skin morphogenesis. Acts as a negative regulator for several EGFR family members, including ERBB2, ERBB3 and ERBB4. Inhibits EGFR catalytic activity by interfering with its dimerization. Inhibits autophosphorylation of EGFR, ERBB2 and ERBB4. Important for normal keratinocyte proliferation and differentiation. Plays a role in modulating the response to steroid hormones in the uterus. Required for normal response to progesterone in the uterus and for fertility. Mediates epithelial estrogen responses in the uterus by regulating ESR1 levels and activation. Important for regulation of endometrium cell proliferation. Important for normal prenatal and perinatal lung development. The chain is ERBB receptor feedback inhibitor 1 (Errfi1) from Mus musculus (Mouse).